The following is a 206-amino-acid chain: ATP phosphoribosyltransferase (206 aa).

This sequence belongs to the ATP phosphoribosyltransferase family. Short subfamily. As to quaternary structure, heteromultimer composed of HisG and HisZ subunits.

The protein resides in the cytoplasm. The catalysed reaction is 1-(5-phospho-beta-D-ribosyl)-ATP + diphosphate = 5-phospho-alpha-D-ribose 1-diphosphate + ATP. Its pathway is amino-acid biosynthesis; L-histidine biosynthesis; L-histidine from 5-phospho-alpha-D-ribose 1-diphosphate: step 1/9. Catalyzes the condensation of ATP and 5-phosphoribose 1-diphosphate to form N'-(5'-phosphoribosyl)-ATP (PR-ATP). Has a crucial role in the pathway because the rate of histidine biosynthesis seems to be controlled primarily by regulation of HisG enzymatic activity. The chain is ATP phosphoribosyltransferase from Sulfurovum sp. (strain NBC37-1).